The sequence spans 195 residues: Small ribosomal subunit protein uS5 (195 aa).

The 64-residue stretch at Ile22–Val85 folds into the S5 DRBM domain. Positions Gln164–Gly195 are disordered. Basic and acidic residues predominate over residues Lys172 to Asp182. A compositionally biased stretch (low complexity) spans Gly183–Gly195.

Belongs to the universal ribosomal protein uS5 family. Part of the 30S ribosomal subunit. Contacts proteins S4 and S8.

In terms of biological role, with S4 and S12 plays an important role in translational accuracy. Functionally, located at the back of the 30S subunit body where it stabilizes the conformation of the head with respect to the body. In Phenylobacterium zucineum (strain HLK1), this protein is Small ribosomal subunit protein uS5.